The sequence spans 203 residues: Pyridoxine/pyridoxamine 5'-phosphate oxidase (203 aa).

FMN is bound by residues 50 to 55, 65 to 66, Lys-72, and Gln-94; these read RMVLLK and YT. Lys-55 provides a ligand contact to substrate. The substrate site is built by Tyr-112, Arg-116, and Ser-120. Residues 129–130 and Trp-174 contribute to the FMN site; that span reads QS. 180 to 182 provides a ligand contact to substrate; that stretch reads RLH. Arg-184 contributes to the FMN binding site.

Belongs to the pyridoxamine 5'-phosphate oxidase family. In terms of assembly, homodimer. It depends on FMN as a cofactor.

The enzyme catalyses pyridoxamine 5'-phosphate + O2 + H2O = pyridoxal 5'-phosphate + H2O2 + NH4(+). It carries out the reaction pyridoxine 5'-phosphate + O2 = pyridoxal 5'-phosphate + H2O2. It functions in the pathway cofactor metabolism; pyridoxal 5'-phosphate salvage; pyridoxal 5'-phosphate from pyridoxamine 5'-phosphate: step 1/1. It participates in cofactor metabolism; pyridoxal 5'-phosphate salvage; pyridoxal 5'-phosphate from pyridoxine 5'-phosphate: step 1/1. Catalyzes the oxidation of either pyridoxine 5'-phosphate (PNP) or pyridoxamine 5'-phosphate (PMP) into pyridoxal 5'-phosphate (PLP). This Brucella anthropi (strain ATCC 49188 / DSM 6882 / CCUG 24695 / JCM 21032 / LMG 3331 / NBRC 15819 / NCTC 12168 / Alc 37) (Ochrobactrum anthropi) protein is Pyridoxine/pyridoxamine 5'-phosphate oxidase.